We begin with the raw amino-acid sequence, 143 residues long: Histone H2B (143 aa).

Residues 1–52 (MAPKPASTAGKAPASTASKAPVKSDAAKTASKSKVSSGADGEKKKRKKTRKE) form a disordered region. N6-acetyllysine; alternate is present on K11. A Glycyl lysine isopeptide (Lys-Gly) (interchain with G-Cter in SUMO); alternate cross-link involves residue K11. S15 is subject to Phosphoserine. K19 is modified (N6-acetyllysine). Low complexity predominate over residues 23–39 (KSDAAKTASKSKVSSGA). K137 is covalently cross-linked (Glycyl lysine isopeptide (Lys-Gly) (interchain with G-Cter in ubiquitin)).

The protein belongs to the histone H2B family. The nucleosome is a histone octamer containing two molecules each of H2A, H2B, H3 and H4 assembled in one H3-H4 heterotetramer and two H2A-H2B heterodimers. The octamer wraps approximately 147 bp of DNA. In terms of processing, monoubiquitinated to form H2BK123ub1. H2BK123ub1 gives a specific tag for epigenetic transcriptional activation and is also prerequisite for H3K4me and H3K79me formation. H2BK123ub1 also modulates the formation of double-strand breaks during meiosis and is a prerequisite for DNA-damage checkpoint activation. Phosphorylated to form H2BS10ph during progression through meiotic prophase. May be correlated with chromosome condensation. Post-translationally, acetylation of N-terminal lysines and particularly formation of H2BK11ac has a positive effect on transcription. In terms of processing, sumoylation to form H2BK6su occurs preferentially near the telomeres and represses gene transcription.

Its subcellular location is the nucleus. The protein resides in the chromosome. Core component of nucleosome. Nucleosomes wrap and compact DNA into chromatin, limiting DNA accessibility to the cellular machineries which require DNA as a template. Histones thereby play a central role in transcription regulation, DNA repair, DNA replication and chromosomal stability. DNA accessibility is regulated via a complex set of post-translational modifications of histones, also called histone code, and nucleosome remodeling. The polypeptide is Histone H2B (htbA) (Agaricus bisporus (White button mushroom)).